A 498-amino-acid polypeptide reads, in one-letter code: ATP synthase subunit beta, chloroplastic (498 aa).

172-179 (GGAGVGKT) contributes to the ATP binding site.

Belongs to the ATPase alpha/beta chains family. As to quaternary structure, F-type ATPases have 2 components, CF(1) - the catalytic core - and CF(0) - the membrane proton channel. CF(1) has five subunits: alpha(3), beta(3), gamma(1), delta(1), epsilon(1). CF(0) has four main subunits: a(1), b(1), b'(1) and c(9-12).

It is found in the plastid. The protein localises to the chloroplast thylakoid membrane. The enzyme catalyses ATP + H2O + 4 H(+)(in) = ADP + phosphate + 5 H(+)(out). In terms of biological role, produces ATP from ADP in the presence of a proton gradient across the membrane. The catalytic sites are hosted primarily by the beta subunits. The polypeptide is ATP synthase subunit beta, chloroplastic (Sorghum bicolor (Sorghum)).